Reading from the N-terminus, the 592-residue chain is Transcription factor MYC3 (592 aa).

The interval Ser-82–Asp-141 is JAZ-interaction domain. 4 disordered regions span residues Glu-261 to Gln-313, Cys-341 to Gly-361, Glu-393 to Gln-422, and Gln-465 to Ser-508. A compositionally biased stretch (low complexity) spans Ser-278–Lys-293. Basic and acidic residues predominate over residues Ser-294–Asp-306. The span at Val-352 to Gly-361 shows a compositional bias: polar residues. Residues Lys-398–Ala-407 are compositionally biased toward basic residues. 2 stretches are compositionally biased toward basic and acidic residues: residues Asn-408–Gln-422 and Glu-468–Ser-482. Residues Glu-411–Leu-460 form the bHLH domain.

Homo- and heterodimer. Interacts with MYB28, MYB29, MYB34, MYB51, MYB76, MYB122, MYC2, MYC4, AFPH2/NINJA and the JAZ repressors TIFY10A/JAZ1, TIFY10B/JAZ2, TIFY6B/JAZ3, TIFY11A/JAZ5, TIFY11B/JAZ6, TIFY5B/JAZ7, TIFY5A/JAZ8, TIFY7/JAZ9, TIFY9/JAZ10, TIFY3A/JAZ11 and TIFY3B/JAZ12. As to expression, constitutively expressed in roots, stems, leaves, flowers, and seedlings.

The protein resides in the nucleus. Functionally, transcription factor involved in tryptophan, jasmonic acid (JA) and other stress-responsive gene regulation. With MYC2 and MYC4, controls additively subsets of JA-dependent responses. Can form complexes with all known glucosinolate-related MYBs to regulate glucosinolate biosynthesis. Binds to the G-box (5'-CACGTG-3') of promoters. Activates multiple TIFY/JAZ promoters. The chain is Transcription factor MYC3 (MYC3) from Arabidopsis thaliana (Mouse-ear cress).